A 637-amino-acid chain; its full sequence is Chaperone protein DnaK (637 aa).

Thr-196 is modified (phosphothreonine; by autocatalysis). The segment at 598–637 (AEAPGADAPEGQAPQDGGSKKGGEGAVENAEYEVIDGDGK) is disordered. Positions 627-637 (AEYEVIDGDGK) are enriched in acidic residues.

The protein belongs to the heat shock protein 70 family.

Functionally, acts as a chaperone. This chain is Chaperone protein DnaK, found in Chlorobium luteolum (strain DSM 273 / BCRC 81028 / 2530) (Pelodictyon luteolum).